A 133-amino-acid polypeptide reads, in one-letter code: MTLNLCVLTPNRTVWNSKVNEIILSTNSGQIGVLPNHASVATAVDIGILKIRLDGQWLTMALMGGFAIIGNNEITVLVNDAEKGSDIDSQEAQQTLEIAEANFRKAEGKRQKIEANLALRRARTRVETINAIS.

Belongs to the ATPase epsilon chain family. F-type ATPases have 2 components, CF(1) - the catalytic core - and CF(0) - the membrane proton channel. CF(1) has five subunits: alpha(3), beta(3), gamma(1), delta(1), epsilon(1). CF(0) has three main subunits: a, b and c.

The protein localises to the plastid. It localises to the chloroplast thylakoid membrane. Its function is as follows. Produces ATP from ADP in the presence of a proton gradient across the membrane. In Daucus carota (Wild carrot), this protein is ATP synthase epsilon chain, chloroplastic.